We begin with the raw amino-acid sequence, 312 residues long: Coiled-coil domain-containing protein 42 homolog (312 aa).

2 coiled-coil regions span residues 34 to 121 (RLLE…RLKE) and 172 to 233 (ATHQ…WESQ).

Belongs to the CFAP73 family.

The sequence is that of Coiled-coil domain-containing protein 42 homolog from Nematostella vectensis (Starlet sea anemone).